The chain runs to 399 residues: CCA-adding enzyme (399 aa).

ATP-binding residues include Gly32 and Arg35. 2 residues coordinate CTP: Gly32 and Arg35. Residues Asp45 and Asp47 each contribute to the Mg(2+) site. 5 residues coordinate ATP: Arg116, Asp159, Arg162, Arg165, and Arg168. The CTP site is built by Arg116, Asp159, Arg162, Arg165, and Arg168.

It belongs to the tRNA nucleotidyltransferase/poly(A) polymerase family. Bacterial CCA-adding enzyme type 3 subfamily. Homodimer. Requires Mg(2+) as cofactor.

The enzyme catalyses a tRNA precursor + 2 CTP + ATP = a tRNA with a 3' CCA end + 3 diphosphate. It catalyses the reaction a tRNA with a 3' CCA end + 2 CTP + ATP = a tRNA with a 3' CCACCA end + 3 diphosphate. Functionally, catalyzes the addition and repair of the essential 3'-terminal CCA sequence in tRNAs without using a nucleic acid template. Adds these three nucleotides in the order of C, C, and A to the tRNA nucleotide-73, using CTP and ATP as substrates and producing inorganic pyrophosphate. tRNA 3'-terminal CCA addition is required both for tRNA processing and repair. Also involved in tRNA surveillance by mediating tandem CCA addition to generate a CCACCA at the 3' terminus of unstable tRNAs. While stable tRNAs receive only 3'-terminal CCA, unstable tRNAs are marked with CCACCA and rapidly degraded. The sequence is that of CCA-adding enzyme from Streptococcus pneumoniae serotype 4 (strain ATCC BAA-334 / TIGR4).